Reading from the N-terminus, the 146-residue chain is Ribonuclease H (146 aa).

Residues 1–138 (MYAWTDGACR…ADALANRGID (138 aa)) enclose the RNase H type-1 domain. D6, E44, D66, and D130 together coordinate Mg(2+).

This sequence belongs to the RNase H family. As to quaternary structure, monomer. The cofactor is Mg(2+).

The protein localises to the cytoplasm. It carries out the reaction Endonucleolytic cleavage to 5'-phosphomonoester.. In terms of biological role, endonuclease that specifically degrades the RNA of RNA-DNA hybrids. This chain is Ribonuclease H, found in Alkalilimnicola ehrlichii (strain ATCC BAA-1101 / DSM 17681 / MLHE-1).